Reading from the N-terminus, the 179-residue chain is Inosine/xanthosine triphosphatase (179 aa).

Glutamate 71 lines the Mg(2+) pocket. Residue 71-72 participates in substrate binding; sequence EA.

Belongs to the YjjX NTPase family. As to quaternary structure, homodimer. Mg(2+) is required as a cofactor. Requires Mn(2+) as cofactor.

It carries out the reaction XTP + H2O = XDP + phosphate + H(+). It catalyses the reaction ITP + H2O = IDP + phosphate + H(+). Its function is as follows. Phosphatase that hydrolyzes non-canonical purine nucleotides such as XTP and ITP to their respective diphosphate derivatives. Probably excludes non-canonical purines from DNA/RNA precursor pool, thus preventing their incorporation into DNA/RNA and avoiding chromosomal lesions. In Shewanella oneidensis (strain ATCC 700550 / JCM 31522 / CIP 106686 / LMG 19005 / NCIMB 14063 / MR-1), this protein is Inosine/xanthosine triphosphatase.